A 246-amino-acid chain; its full sequence is E3 ubiquitin ligase TRIM40 (246 aa).

The RING-type zinc finger occupies 12–55 (CPICLDPLKEAVSTDCRHLFCRMCLTQHMDKASVSGILSCPVCR). The B box-type zinc-finger motif lies at 64 to 105 (GDNYICHTHQKRVRRFCEASGHLLCEECLQSPEHQSHTELSI). Residues cysteine 69, histidine 72, cysteine 91, and histidine 97 each coordinate Zn(2+). The stretch at 105-170 (IENAISHYKE…DQTKEQLKAL (66 aa)) forms a coiled coil.

Belongs to the TRIM/RBCC family. Interacts with NEDD8.

It catalyses the reaction S-ubiquitinyl-[E2 ubiquitin-conjugating enzyme]-L-cysteine + [acceptor protein]-L-lysine = [E2 ubiquitin-conjugating enzyme]-L-cysteine + N(6)-ubiquitinyl-[acceptor protein]-L-lysine.. In terms of biological role, E3 ubiquitin-protein ligase that plays a role in the limitation of the innate immune response. Mediates inhibition of the RLR signaling pathway by ubiquitinating RIGI and IFIH1 receptors, leading to their proteasomal degradation. Also promotes the neddylation of IKBKG/NEMO, stabilizing NFKBIA, and thereby inhibiting of NF-kappa-B nuclear translocation and activation. This chain is E3 ubiquitin ligase TRIM40 (Trim40), found in Mus musculus (Mouse).